Here is a 388-residue protein sequence, read N- to C-terminus: tRNA (guanine-N(7)-)-methyltransferase non-catalytic subunit (388 aa).

4 WD repeats span residues 58-102 (VEKR…KGDI), 112-151 (VVPK…AIEM), 153-194 (GAIS…DSFF), and 196-234 (GHTE…APRR). Residues 365–388 (EKKKRRLNEDINGDDGEGPGPSNS) form a disordered region.

It belongs to the WD repeat TRM82 family. As to quaternary structure, forms a heterodimer with the catalytic subunit.

The protein resides in the nucleus. It functions in the pathway tRNA modification; N(7)-methylguanine-tRNA biosynthesis. Required for the formation of N(7)-methylguanine at position 46 (m7G46) in tRNA. In the complex, it is required to stabilize and induce conformational changes of the catalytic subunit. In Caenorhabditis elegans, this protein is tRNA (guanine-N(7)-)-methyltransferase non-catalytic subunit.